The following is a 102-amino-acid chain: Urease subunit beta (102 aa).

It belongs to the urease beta subunit family. As to quaternary structure, heterotrimer of UreA (gamma), UreB (beta) and UreC (alpha) subunits. Three heterotrimers associate to form the active enzyme.

It localises to the cytoplasm. The catalysed reaction is urea + 2 H2O + H(+) = hydrogencarbonate + 2 NH4(+). It functions in the pathway nitrogen metabolism; urea degradation; CO(2) and NH(3) from urea (urease route): step 1/1. This chain is Urease subunit beta, found in Acinetobacter baumannii (strain AB307-0294).